The sequence spans 89 residues: Gamma-bungarotoxin (89 aa).

The N-terminal stretch at 1–21 is a signal peptide; that stretch reads MKTLLLTLVVVTIVCLDLGYT. 5 cysteine pairs are disulfide-bonded: cysteine 24-cysteine 45, cysteine 27-cysteine 32, cysteine 38-cysteine 66, cysteine 70-cysteine 81, and cysteine 82-cysteine 87. The short motif at 54-56 is the Cell attachment site element; sequence RGD.

It belongs to the three-finger toxin family. Ancestral subfamily. Orphan group V sub-subfamily. In terms of tissue distribution, expressed by the venom gland.

Its subcellular location is the secreted. In terms of biological role, exhibits M2 muscarinic acetylcholine receptor (CHRM2)-blocking activity, but has a weak binding activity toward nicotinic AChR. Moreover, it inhibits collagen-induced platelet aggregation. The polypeptide is Gamma-bungarotoxin (Bungarus multicinctus (Many-banded krait)).